A 267-amino-acid polypeptide reads, in one-letter code: Phosphoinositide-3-kinase-interacting protein 1 (267 aa).

A signal peptide spans M1–G21. Residues S22–T172 are Extracellular-facing. One can recognise a Kringle domain in the interval G24–C101. 3 disulfide bridges follow: C25/C101, C46/C82, and C70/C96. The segment covering P91–C101 has biased composition (basic and acidic residues). Positions P91–E122 are disordered. A helical transmembrane segment spans residues L173–V193. The Cytoplasmic segment spans residues L194–A267.

It localises to the cell membrane. Negative regulator of hepatic phosphatidylinositol 3-kinase (PI3K) activity. This Rattus norvegicus (Rat) protein is Phosphoinositide-3-kinase-interacting protein 1 (Pik3ip1).